A 165-amino-acid chain; its full sequence is GTPase activating protein 1 (165 aa).

A C2 domain is found at 1–105 (MLGHLVGLVK…VVKMKIEGVA (105 aa)). Ca(2+)-binding residues include arginine 22, aspartate 23, aspartate 28, aspartate 74, lysine 75, aspartate 76, and aspartate 81.

It belongs to the plant CAR protein family. In terms of assembly, binds to PYR/PYL/RCAR abscisic acid intracellular receptors in an ABA-independent manner, both at the plasma membrane and in the nucleus. Binds phospholipids in a Ca(2+)-dependent manner. Interacts with YchF1.

The protein resides in the cell membrane. Its subcellular location is the nucleus. The protein localises to the cytoplasm. It is found in the cytosol. Its function is as follows. Mediates the transient calcium-dependent interaction of PYR/PYL/RCAR abscisic acid (ABA) receptors with the plasma membrane and thus regulates ABA sensitivity. Stimulates the GTPase/ATPase activities of YchF1, and regulates its subcellular localization. Promotes tolerance towards salinity stress by limiting the accumulation of reactive oxygen species (ROS). Promotes resistance to bacterial pathogens. The polypeptide is GTPase activating protein 1 (Oryza sativa subsp. indica (Rice)).